The following is a 507-amino-acid chain: E3 ubiquitin-protein ligase TRIM31 (507 aa).

The RING-type zinc-finger motif lies at 16–56; the sequence is CPICMEILQDPVTIDCGHNFCLQCISQVGKTSEKIQCPLCK. A B box-type zinc finger spans residues 89-130; the sequence is KEDSRCQRHKEKLHYFCEQDGAFLCVVCRDSKDHKSHNVTLI. The Zn(2+) site is built by C94, H97, C116, and H122. Coiled-coil stretches lie at residues 176 to 241 and 269 to 298; these read EKLK…LQSS and EDLE…DMNA. The 193-residue stretch at 315-507 folds into the B30.2/SPRY domain; sequence EKESWSLLQK…VACSHITLSP (193 aa).

It belongs to the TRIM/RBCC family. May form oligomers. Interacts with isoform p52shc of SHC1. In terms of processing, auto-ubiquitinated (in vitro). Highly expressed in the gastrointestrinal tract, with high expression in the small intestine, moderate in the large intestine and weak in the stomach and esophagus.

Its subcellular location is the cytoplasm. The protein localises to the mitochondrion. It catalyses the reaction S-ubiquitinyl-[E2 ubiquitin-conjugating enzyme]-L-cysteine + [acceptor protein]-L-lysine = [E2 ubiquitin-conjugating enzyme]-L-cysteine + N(6)-ubiquitinyl-[acceptor protein]-L-lysine.. Its pathway is protein modification; protein ubiquitination. In terms of biological role, E3 ubiquitin-protein ligase that acts as a regulator of antiviral immune response and inflammation by mediating ubiquitination of substrates. Acts as a regulator of innate immune defense against viruses by mediating 'Lys-63'-linked ubiquitination of MAVS, promoting MAVS polymerization and formation of three-stranded helical filaments on mitochondria. Acts as a negative regulator of the NLRP3 inflammasome by catalyzing 'Lys-48'-linked ubiquitination of NLRP3, leading to its degradation. Regulator of Src-induced anchorage independent cell growth. This chain is E3 ubiquitin-protein ligase TRIM31, found in Mus musculus (Mouse).